The sequence spans 376 residues: MPPTPEVGLPLWLLAELTYRCPLQCPYCSNPLDFAAQGQELSTEQWFKVMAEAREMGAAQIGFSGGEPLVRQDLAQLIAEARRLGYYTNLITSGIGLTEARIADFKKAGLDHIQISFQASDEQVNNLLAGSKKAFAQKLEMARAVKAHGYPMVLNFVTHRHNIDKIDRIIELCIALEADFVELATCQFYGWAHLNRLGLLPTRAQLERAERITNEYRDKLKAEGNPCKLIFVTPDYYEERPKACMNGWGNLFLTITPDGTALPCHGARQLPVQFPNVRDHDLHHIWYESFGFNRFRGYEWMREPCRSCDEKEKDFGGCRCQAFMLTGDASNADPVCAKSTDHGIILKAREEAETAQLAIEQMTFRNDRNSRVIARG.

Positions 7–222 (VGLPLWLLAE…TNEYRDKLKA (216 aa)) constitute a Radical SAM core domain. [4Fe-4S] cluster contacts are provided by C21, C25, and C28.

The protein belongs to the radical SAM superfamily. PqqE family. Interacts with PqqD. The interaction is necessary for activity of PqqE. It depends on [4Fe-4S] cluster as a cofactor.

It carries out the reaction [PQQ precursor protein] + S-adenosyl-L-methionine = E-Y cross-linked-[PQQ precursor protein] + 5'-deoxyadenosine + L-methionine + H(+). It participates in cofactor biosynthesis; pyrroloquinoline quinone biosynthesis. Its function is as follows. Catalyzes the cross-linking of a glutamate residue and a tyrosine residue in the PqqA protein as part of the biosynthesis of pyrroloquinoline quinone (PQQ). The polypeptide is PqqA peptide cyclase (Pseudomonas putida (strain ATCC 47054 / DSM 6125 / CFBP 8728 / NCIMB 11950 / KT2440)).